Here is a 182-residue protein sequence, read N- to C-terminus: Nudix hydrolase 17, mitochondrial (182 aa).

A mitochondrion-targeting transit peptide spans 1–26 (MGVEKMVCLASRTGRQFQRYNKGRRQ). Positions 27–158 (VVGCVPYRFK…WMKEALDVLV (132 aa)) constitute a Nudix hydrolase domain. Residues 65 to 86 (GGWELDESVEEAASRECLEEAG) carry the Nudix box motif. Residues glutamate 80 and glutamate 84 each coordinate Mg(2+).

It belongs to the Nudix hydrolase family. The cofactor is Mg(2+). Mn(2+) is required as a cofactor. In terms of tissue distribution, expressed in roots, leaves, stems and inflorescences.

Its subcellular location is the mitochondrion. Functionally, probably mediates the hydrolysis of some nucleoside diphosphate derivatives. This chain is Nudix hydrolase 17, mitochondrial (NUDT17), found in Arabidopsis thaliana (Mouse-ear cress).